The chain runs to 251 residues: Osmotin-like protein (251 aa).

The N-terminal stretch at 1–21 (MSHLTTFLVFFLLAFVTYTYA) is a signal peptide. Cystine bridges form between Cys-31–Cys-226, Cys-73–Cys-83, Cys-88–Cys-94, Cys-142–Cys-214, Cys-147–Cys-197, Cys-155–Cys-165, Cys-169–Cys-178, and Cys-179–Cys-184. Residue Asn-233 is glycosylated (N-linked (GlcNAc...) asparagine).

Belongs to the thaumatin family.

This is Osmotin-like protein (OLPA) from Nicotiana tabacum (Common tobacco).